Here is an 83-residue protein sequence, read N- to C-terminus: Mitochondrial import inner membrane translocase subunit Tim8 B (83 aa).

N-acetylalanine is present on alanine 2. Positions 36–59 (CWDKCVEKPGSRLDSRTENCLSSC) match the Twin CX3C motif motif. 2 disulfides stabilise this stretch: cysteine 36–cysteine 59 and cysteine 40–cysteine 55.

It belongs to the small Tim family. In terms of assembly, heterohexamer; possibly composed of 3 copies of TIMM8B and 3 copies of TIMM13, named soluble 70 kDa complex. Associates with the TIM22 complex, whose core is composed of TIMM22.

It is found in the mitochondrion inner membrane. In terms of biological role, probable mitochondrial intermembrane chaperone that participates in the import and insertion of some multi-pass transmembrane proteins into the mitochondrial inner membrane. Also required for the transfer of beta-barrel precursors from the TOM complex to the sorting and assembly machinery (SAM complex) of the outer membrane. Acts as a chaperone-like protein that protects the hydrophobic precursors from aggregation and guide them through the mitochondrial intermembrane space. This Mus musculus (Mouse) protein is Mitochondrial import inner membrane translocase subunit Tim8 B (Timm8b).